The primary structure comprises 703 residues: Calpain-8 (703 aa).

One can recognise a Calpain catalytic domain in the interval 45–344 (LFKDPEFPAC…FSRLEICNLS (300 aa)). Catalysis depends on residues Cys-105, His-262, and Asn-286. Positions 355 to 512 (KWNLVLFNGR…VFSEKKAQAL (158 aa)) are domain III. The interval 513-531 (EIGDAVPGDPHEPHPRDMD) is linker. EF-hand domains follow at residues 531–566 (DGEDEHFWSLSEEFADKDSEISAHQLKRVLNGLLSK), 575–610 (FNINTCREMISLLDGDGTGSLRPVEFKTLWLKICKY), 605–640 (LKICKYLEIYQEMDHSRAGTIDAHEMRTALKKAGFT), and 670–703 (IRLEILFKLFRLLDKDQNGIVQLSLAEWLCRALV). The interval 532–703 (GEDEHFWSLS…LAEWLCRALV (172 aa)) is domain IV. 9 residues coordinate Ca(2+): Asp-588, Asp-590, Thr-592, Ser-594, Glu-599, Asp-618, Ser-620, Thr-624, and Glu-629.

This sequence belongs to the peptidase C2 family. As to quaternary structure, monomer and homooligomer. Interacts with COPS1/GPS1, COPB1, EYA2, NME2, NME4 and TOMM70. Ca(2+) is required as a cofactor. Post-translationally, undergoes autolytic cleavage between Ala-5 and Ala-6 which gives rise to fragments extending from Ala-6 to the C-terminus, Ala-6 to the EF-hand 2 domain and from Ala-6 to the beginning of domain III. As to expression, predominantly expressed in the stomach. Localizes strictly to the surface mucus cells in the gastric epithelium and the mucus-secreting goblet cells in the duodenum.

It localises to the cytoplasm. It is found in the golgi apparatus. It catalyses the reaction Broad endopeptidase specificity.. With respect to regulation, the concentration of calcium for half-maximal activity is 0.3 mM. Inhibited by calpastatin and calpeptin. Functionally, calcium-regulated non-lysosomal thiol-protease. Involved in membrane trafficking in the gastric surface mucus cells (pit cells) and may involve the membrane trafficking of mucus cells via interactions with coat protein. Proteolytically cleaves the beta-subunit of coatomer complex. In Mus musculus (Mouse), this protein is Calpain-8 (Capn8).